Consider the following 781-residue polypeptide: Death domain-containing protein 1 (781 aa).

2 consecutive ZU5 domains span residues 167–301 and 302–483; these read IMEK…VSCL and KKES…VLHL. The Death domain occupies 679–764; the sequence is DNLLHWLAEE…DLAEELKFKW (86 aa).

The sequence is that of Death domain-containing protein 1 (DTHD1) from Homo sapiens (Human).